Reading from the N-terminus, the 458-residue chain is F-box/WD repeat-containing protein 9 (458 aa).

At M1 the chain carries N-acetylmethionine. Residues 1–28 (MELPPGPRDDPHAWDDDSDPELEPDTDA) are disordered. Residues 16 to 28 (DDSDPELEPDTDA) show a composition bias toward acidic residues. 2 positions are modified to phosphoserine: S18 and S59. Positions 76 to 123 (VPGLLSLPPELLLEICAYLDARLVLHVLPRVCHALRDLVRDRVTWRLR) constitute an F-box domain. WD repeat units lie at residues 171-210 (GHFA…VEPS), 224-261 (THKG…QQFG), 264-301 (KGKA…ALLK), 305-342 (LHSS…VLQR), 344-381 (QLDS…FQLV), 387-424 (GHRS…RTIC), and 427-458 (SHHN…RLQA).

In terms of assembly, interacts with SKP1 and CUL1.

In terms of biological role, substrate-recognition component of the SCF (SKP1-CUL1-F-box protein)-type E3 ubiquitin ligase complex. The sequence is that of F-box/WD repeat-containing protein 9 (FBXW9) from Bos taurus (Bovine).